A 316-amino-acid polypeptide reads, in one-letter code: 4-hydroxy-3-methylbut-2-enyl diphosphate reductase (316 aa).

Cysteine 12 lines the [4Fe-4S] cluster pocket. Residues histidine 41 and histidine 74 each contribute to the (2E)-4-hydroxy-3-methylbut-2-enyl diphosphate site. 2 residues coordinate dimethylallyl diphosphate: histidine 41 and histidine 74. The isopentenyl diphosphate site is built by histidine 41 and histidine 74. Cysteine 96 contacts [4Fe-4S] cluster. Histidine 124 provides a ligand contact to (2E)-4-hydroxy-3-methylbut-2-enyl diphosphate. Histidine 124 is a binding site for dimethylallyl diphosphate. Histidine 124 provides a ligand contact to isopentenyl diphosphate. The active-site Proton donor is the glutamate 126. Residue threonine 167 participates in (2E)-4-hydroxy-3-methylbut-2-enyl diphosphate binding. Cysteine 197 contacts [4Fe-4S] cluster. (2E)-4-hydroxy-3-methylbut-2-enyl diphosphate is bound by residues serine 225, serine 226, asparagine 227, and serine 269. The dimethylallyl diphosphate site is built by serine 225, serine 226, asparagine 227, and serine 269. Isopentenyl diphosphate-binding residues include serine 225, serine 226, asparagine 227, and serine 269.

It belongs to the IspH family. In terms of assembly, homodimer. Requires [4Fe-4S] cluster as cofactor.

The catalysed reaction is isopentenyl diphosphate + 2 oxidized [2Fe-2S]-[ferredoxin] + H2O = (2E)-4-hydroxy-3-methylbut-2-enyl diphosphate + 2 reduced [2Fe-2S]-[ferredoxin] + 2 H(+). It catalyses the reaction dimethylallyl diphosphate + 2 oxidized [2Fe-2S]-[ferredoxin] + H2O = (2E)-4-hydroxy-3-methylbut-2-enyl diphosphate + 2 reduced [2Fe-2S]-[ferredoxin] + 2 H(+). It functions in the pathway isoprenoid biosynthesis; dimethylallyl diphosphate biosynthesis; dimethylallyl diphosphate from (2E)-4-hydroxy-3-methylbutenyl diphosphate: step 1/1. It participates in isoprenoid biosynthesis; isopentenyl diphosphate biosynthesis via DXP pathway; isopentenyl diphosphate from 1-deoxy-D-xylulose 5-phosphate: step 6/6. Its function is as follows. Catalyzes the conversion of 1-hydroxy-2-methyl-2-(E)-butenyl 4-diphosphate (HMBPP) into a mixture of isopentenyl diphosphate (IPP) and dimethylallyl diphosphate (DMAPP). Acts in the terminal step of the DOXP/MEP pathway for isoprenoid precursor biosynthesis. The sequence is that of 4-hydroxy-3-methylbut-2-enyl diphosphate reductase from Escherichia coli O6:H1 (strain CFT073 / ATCC 700928 / UPEC).